We begin with the raw amino-acid sequence, 299 residues long: tRNA-cytidine(32) 2-sulfurtransferase (299 aa).

The short motif at serine 49–serine 54 is the PP-loop motif element. [4Fe-4S] cluster contacts are provided by cysteine 124, cysteine 127, and cysteine 215.

The protein belongs to the TtcA family. Homodimer. Mg(2+) is required as a cofactor. It depends on [4Fe-4S] cluster as a cofactor.

The protein resides in the cytoplasm. The enzyme catalyses cytidine(32) in tRNA + S-sulfanyl-L-cysteinyl-[cysteine desulfurase] + AH2 + ATP = 2-thiocytidine(32) in tRNA + L-cysteinyl-[cysteine desulfurase] + A + AMP + diphosphate + H(+). Its pathway is tRNA modification. Functionally, catalyzes the ATP-dependent 2-thiolation of cytidine in position 32 of tRNA, to form 2-thiocytidine (s(2)C32). The sulfur atoms are provided by the cysteine/cysteine desulfurase (IscS) system. The chain is tRNA-cytidine(32) 2-sulfurtransferase from Deinococcus radiodurans (strain ATCC 13939 / DSM 20539 / JCM 16871 / CCUG 27074 / LMG 4051 / NBRC 15346 / NCIMB 9279 / VKM B-1422 / R1).